Reading from the N-terminus, the 202-residue chain is Probable GTP-binding protein EngB (202 aa).

An EngB-type G domain is found at Val-26 to Ile-200. Residues Gly-34–Ser-41, Gly-61–Thr-65, Asp-79–Gly-82, Asn-146–Asp-149, and Phe-179–Ser-181 each bind GTP. Mg(2+) contacts are provided by Ser-41 and Thr-63.

The protein belongs to the TRAFAC class TrmE-Era-EngA-EngB-Septin-like GTPase superfamily. EngB GTPase family. Mg(2+) is required as a cofactor.

In terms of biological role, necessary for normal cell division and for the maintenance of normal septation. The polypeptide is Probable GTP-binding protein EngB (Baumannia cicadellinicola subsp. Homalodisca coagulata).